The chain runs to 91 residues: MAKQLSTARKFKMITGKDLFQQQKAMDTELKKEDGEITDLMEFVQYGLYLALFQDNIVKAKSDFSDFRSSFEFDTDGKGLKELVELWQKEI.

Belongs to the skunalikevirus chaperone protein gp12 family. In terms of assembly, homohexamer. Further self-assembles as a spiral.

Probable chaperone for the tape measure protein. Might help to maintain the tape measure protein in solution during tail assembly. This Lactococcus phage p2 (Lactococcus lactis bacteriophage p2) protein is Chaperone protein gp12.